The sequence spans 305 residues: UDP-3-O-acyl-N-acetylglucosamine deacetylase (305 aa).

Zn(2+) is bound by residues H79, H238, and D242. The Proton donor role is filled by H265.

This sequence belongs to the LpxC family. Requires Zn(2+) as cofactor.

The enzyme catalyses a UDP-3-O-[(3R)-3-hydroxyacyl]-N-acetyl-alpha-D-glucosamine + H2O = a UDP-3-O-[(3R)-3-hydroxyacyl]-alpha-D-glucosamine + acetate. It functions in the pathway glycolipid biosynthesis; lipid IV(A) biosynthesis; lipid IV(A) from (3R)-3-hydroxytetradecanoyl-[acyl-carrier-protein] and UDP-N-acetyl-alpha-D-glucosamine: step 2/6. Functionally, catalyzes the hydrolysis of UDP-3-O-myristoyl-N-acetylglucosamine to form UDP-3-O-myristoylglucosamine and acetate, the committed step in lipid A biosynthesis. The chain is UDP-3-O-acyl-N-acetylglucosamine deacetylase from Sodalis glossinidius (strain morsitans).